The sequence spans 203 residues: Dual-action ribosomal maturation protein DarP (203 aa).

Residues 1–13 show a composition bias toward polar residues; it reads MQPMTRNSRNSPG. The disordered stretch occupies residues 1–39; sequence MQPMTRNSRNSPGSRFPGAFAPEPDMDEPKSKSQKKRDM. Over residues 27-39 the composition is skewed to basic and acidic residues; sequence DEPKSKSQKKRDM.

It belongs to the DarP family.

It is found in the cytoplasm. Its function is as follows. Member of a network of 50S ribosomal subunit biogenesis factors which assembles along the 30S-50S interface, preventing incorrect 23S rRNA structures from forming. Promotes peptidyl transferase center (PTC) maturation. In Cupriavidus pinatubonensis (strain JMP 134 / LMG 1197) (Cupriavidus necator (strain JMP 134)), this protein is Dual-action ribosomal maturation protein DarP.